We begin with the raw amino-acid sequence, 204 residues long: ATP phosphoribosyltransferase (204 aa).

The protein belongs to the ATP phosphoribosyltransferase family. Short subfamily. In terms of assembly, heteromultimer composed of HisG and HisZ subunits.

Its subcellular location is the cytoplasm. The catalysed reaction is 1-(5-phospho-beta-D-ribosyl)-ATP + diphosphate = 5-phospho-alpha-D-ribose 1-diphosphate + ATP. It functions in the pathway amino-acid biosynthesis; L-histidine biosynthesis; L-histidine from 5-phospho-alpha-D-ribose 1-diphosphate: step 1/9. Its function is as follows. Catalyzes the condensation of ATP and 5-phosphoribose 1-diphosphate to form N'-(5'-phosphoribosyl)-ATP (PR-ATP). Has a crucial role in the pathway because the rate of histidine biosynthesis seems to be controlled primarily by regulation of HisG enzymatic activity. This is ATP phosphoribosyltransferase from Hydrogenobaculum sp. (strain Y04AAS1).